The primary structure comprises 118 residues: Large ribosomal subunit protein uL18 (118 aa).

Belongs to the universal ribosomal protein uL18 family. In terms of assembly, part of the 50S ribosomal subunit; part of the 5S rRNA/L5/L18/L25 subcomplex. Contacts the 5S and 23S rRNAs.

In terms of biological role, this is one of the proteins that bind and probably mediate the attachment of the 5S RNA into the large ribosomal subunit, where it forms part of the central protuberance. This chain is Large ribosomal subunit protein uL18, found in Helicobacter pylori (strain P12).